Reading from the N-terminus, the 368-residue chain is Peptide chain release factor 2 (368 aa).

Position 248 is an N5-methylglutamine (Gln-248).

This sequence belongs to the prokaryotic/mitochondrial release factor family. Methylated by PrmC. Methylation increases the termination efficiency of RF2.

It localises to the cytoplasm. In terms of biological role, peptide chain release factor 2 directs the termination of translation in response to the peptide chain termination codons UGA and UAA. The polypeptide is Peptide chain release factor 2 (Corynebacterium glutamicum (strain R)).